The sequence spans 63 residues: Large ribosomal subunit protein uL30 (63 aa).

It belongs to the universal ribosomal protein uL30 family. Part of the 50S ribosomal subunit.

The polypeptide is Large ribosomal subunit protein uL30 (Bradyrhizobium sp. (strain ORS 278)).